The sequence spans 455 residues: Argininosuccinate lyase (455 aa).

It belongs to the lyase 1 family. Argininosuccinate lyase subfamily.

The protein resides in the cytoplasm. The enzyme catalyses 2-(N(omega)-L-arginino)succinate = fumarate + L-arginine. It participates in amino-acid biosynthesis; L-arginine biosynthesis; L-arginine from L-ornithine and carbamoyl phosphate: step 3/3. This chain is Argininosuccinate lyase, found in Shewanella halifaxensis (strain HAW-EB4).